Consider the following 110-residue polypeptide: Large ribosomal subunit protein uL22 (110 aa).

The protein belongs to the universal ribosomal protein uL22 family. Part of the 50S ribosomal subunit.

Its function is as follows. This protein binds specifically to 23S rRNA; its binding is stimulated by other ribosomal proteins, e.g. L4, L17, and L20. It is important during the early stages of 50S assembly. It makes multiple contacts with different domains of the 23S rRNA in the assembled 50S subunit and ribosome. Functionally, the globular domain of the protein is located near the polypeptide exit tunnel on the outside of the subunit, while an extended beta-hairpin is found that lines the wall of the exit tunnel in the center of the 70S ribosome. The sequence is that of Large ribosomal subunit protein uL22 from Acinetobacter baylyi (strain ATCC 33305 / BD413 / ADP1).